Reading from the N-terminus, the 222-residue chain is Adenylate kinase (222 aa).

Residue Ser-2 is a propeptide, removed in mature form. N-acetylserine is present on residues Ser-2 and Ser-3. 16-21 (GAGKGT) serves as a coordination point for ATP. The NMP stretch occupies residues 36–65 (ATGDMLRSQIAKGTQLGLEAKKIMDQGGLV). Residues Thr-37, Arg-42, 63–65 (GLV), 92–95 (GFPR), and Gln-99 each bind AMP. Residues 133–170 (GRLIHPASGRSYHKIFNPPKEDMKDDVTGEALVQRSDD) form an LID region. ATP contacts are provided by residues Arg-134 and 143–144 (SY). Residues Arg-167 and Arg-178 each contribute to the AMP site. Residue Gln-206 participates in ATP binding.

Belongs to the adenylate kinase family. AK2 subfamily. In terms of assembly, monomer.

It localises to the cytoplasm. It is found in the cytosol. The protein resides in the mitochondrion intermembrane space. It carries out the reaction AMP + ATP = 2 ADP. Functionally, catalyzes the reversible transfer of the terminal phosphate group between ATP and AMP. Plays an important role in cellular energy homeostasis and in adenine nucleotide metabolism. Adenylate kinase activity is critical for regulation of the phosphate utilization and the AMP de novo biosynthesis pathways. The protein is Adenylate kinase of Saccharomyces cerevisiae (strain RM11-1a) (Baker's yeast).